The following is a 510-amino-acid chain: Hydroperoxide bicyclase CYP5164A3, mitochondrial (510 aa).

A mitochondrion-targeting transit peptide spans 1-31; the sequence is MQRVGAASPTCSSLQAPAAAPPILTISPHHR. Cys452 is a binding site for heme.

It belongs to the cytochrome P450 family. Requires heme as cofactor.

The protein resides in the mitochondrion. It carries out the reaction (13S)-hydroperoxy-(9Z,11E,15Z)-octadecatrienoate = plasmodiophorol A. The catalysed reaction is (13S)-hydroperoxy-(9Z,11E,15Z)-octadecatrienoate = plasmodiophorol B. It catalyses the reaction (13S)-hydroperoxy-(9Z,11E,15Z)-octadecatrienoate = ectocarpin A + H2O. The enzyme catalyses (15S)-hydroperoxy-(5Z,8Z,11Z,13E,17Z)-eicosapentaenoate = ectocarpin B + H2O. It carries out the reaction (15S)-hydroperoxy-(5Z,8Z,11Z,13E,17Z)-eicosapentaenoate = ectocarpin C. The catalysed reaction is (15S)-hydroperoxy-(5Z,8Z,11Z,13E,17Z)-eicosapentaenoate + H2O = ectocarpin D. It catalyses the reaction (15S)-hydroperoxy-(5Z,8Z,11Z,13E,17Z)-eicosapentaenoate = 14-oxo-15-hydroxy-(5Z,8Z,11Z,17Z)-eicosatetraenoate. Its pathway is lipid metabolism; oxylipin biosynthesis. Functionally, cytochrome P450 hydroperoxide bicyclase involved in the metabolism of oxylipins 'ectocarpins' natural products, such as hybridalactone, ecklonilactones and derivatives. Isomerizes the hydroperoxides into epoxyalcohols via epoxyallylic radical. Can use alpha-linolenic acid 13(S)-hydroperoxide (13-HPOTE) and eicosapentaenoic acid 15(S)-hydroperoxide (15-HPEPE) as preferred substrate to produce corresponding heterobicyclic oxylipins, such as plasmodiophorol A (6-oxabicyclo[3.1.0]hexane), plasmodiophorol B (2-oxabicyclo[2.2.1]heptane) and plasmodiophorol C (4-hydroxymethyl-1,2-dihydroxycyclopentane) as well as ectocarpin A (3-propenyl-6-oxabicyclo[3.1.0]hexane) formed at about 15:3:3:1 ratio for 13-HPOTE, and analogous to plasmodiophorols A and B including ectocarpin B (3-[(1'E)-propenyl]-6-oxabicyclo[3.1.0]hexane), ectocarpin C, 14-oxo-15-hydroxy-5,8,11,17-eicosate-traenoic acid and ectocarpin D for 15-HPEPE. Barely able to use linoleic acid 13-hydroperoxide (13-HPODE), linoleic acid 9-hydroperoxide (9-HPODE), eicosapentaenoic acid 15-hydroperoxide (15-HPEPE), and alpha-linolenic acid 9-hydroperoxide (9-HPOTE) as substrates. This is Hydroperoxide bicyclase CYP5164A3, mitochondrial from Ectocarpus siliculosus (Brown alga).